Consider the following 404-residue polypeptide: Multidrug resistance protein MdtG (404 aa).

The next 11 helical transmembrane spans lie at 19–39, 56–76, 90–110, 113–133, 144–164, 171–191, 222–242, 254–274, 288–308, 317–337, and 376–396; these read LGCFLTGAAFSLVMPFLPLYV, LVFSITFLFSAIASPFWGGLA, LGMAIVMLLMGMAQNIWQFLI, ALLGLLGGFIPNANALIATQV, TLSTGGVSGALLGPLAGGLLA, PVFFITASVLFICFLLTFFFI, LFVTTLIIQVATGSIAPILTL, IAFISGMIASVPGVAALLSAP, ILIVALIISVLLLIPMSFVQT, FLLGAADGALLPAVQTLLVYN, and AVFCVTAGVVLFNAIYSWNSL.

Belongs to the major facilitator superfamily. DHA1 family. MdtG (TC 2.A.1.2.20) subfamily.

The protein localises to the cell inner membrane. The polypeptide is Multidrug resistance protein MdtG (Salmonella dublin (strain CT_02021853)).